The primary structure comprises 67 residues: DNA-directed RNA polymerase subunit omega (67 aa).

The protein belongs to the RNA polymerase subunit omega family. In terms of assembly, the RNAP catalytic core consists of 2 alpha, 1 beta, 1 beta' and 1 omega subunit. When a sigma factor is associated with the core the holoenzyme is formed, which can initiate transcription.

It catalyses the reaction RNA(n) + a ribonucleoside 5'-triphosphate = RNA(n+1) + diphosphate. In terms of biological role, promotes RNA polymerase assembly. Latches the N- and C-terminal regions of the beta' subunit thereby facilitating its interaction with the beta and alpha subunits. The polypeptide is DNA-directed RNA polymerase subunit omega (Paracidovorax citrulli (strain AAC00-1) (Acidovorax citrulli)).